We begin with the raw amino-acid sequence, 178 residues long: MLAAEGGHNPIIPEPVEIVVGLVAFLLLLFVLWKYAVPRFEKVYEERSKRIEGGIEKAEAAQAEAQRTLEQYRSQLAEARAEAARIRDDARAEGQQIVEEMRAQAQAESERIVSAGQSALAAQRAQIVAELRADLGRQAVDLAGRVVGESLEDEARRRGTVDRFLDELEAASAPASKA.

Residues 11–31 (IIPEPVEIVVGLVAFLLLLFV) form a helical membrane-spanning segment.

The protein belongs to the ATPase B chain family. F-type ATPases have 2 components, F(1) - the catalytic core - and F(0) - the membrane proton channel. F(1) has five subunits: alpha(3), beta(3), gamma(1), delta(1), epsilon(1). F(0) has three main subunits: a(1), b(2) and c(10-14). The alpha and beta chains form an alternating ring which encloses part of the gamma chain. F(1) is attached to F(0) by a central stalk formed by the gamma and epsilon chains, while a peripheral stalk is formed by the delta and b chains.

The protein resides in the cell membrane. F(1)F(0) ATP synthase produces ATP from ADP in the presence of a proton or sodium gradient. F-type ATPases consist of two structural domains, F(1) containing the extramembraneous catalytic core and F(0) containing the membrane proton channel, linked together by a central stalk and a peripheral stalk. During catalysis, ATP synthesis in the catalytic domain of F(1) is coupled via a rotary mechanism of the central stalk subunits to proton translocation. Functionally, component of the F(0) channel, it forms part of the peripheral stalk, linking F(1) to F(0). The sequence is that of ATP synthase subunit b from Saccharopolyspora erythraea (strain ATCC 11635 / DSM 40517 / JCM 4748 / NBRC 13426 / NCIMB 8594 / NRRL 2338).